Here is a 251-residue protein sequence, read N- to C-terminus: Triosephosphate isomerase (251 aa).

Asparagine 9–lysine 11 is a substrate binding site. Histidine 95 functions as the Electrophile in the catalytic mechanism. The Proton acceptor role is filled by glutamate 167. Substrate contacts are provided by residues glycine 173, serine 213, and glycine 234–glycine 235.

It belongs to the triosephosphate isomerase family. In terms of assembly, homodimer.

The protein localises to the cytoplasm. The catalysed reaction is D-glyceraldehyde 3-phosphate = dihydroxyacetone phosphate. It participates in carbohydrate biosynthesis; gluconeogenesis. It functions in the pathway carbohydrate degradation; glycolysis; D-glyceraldehyde 3-phosphate from glycerone phosphate: step 1/1. In terms of biological role, involved in the gluconeogenesis. Catalyzes stereospecifically the conversion of dihydroxyacetone phosphate (DHAP) to D-glyceraldehyde-3-phosphate (G3P). This Geotalea uraniireducens (strain Rf4) (Geobacter uraniireducens) protein is Triosephosphate isomerase.